The sequence spans 464 residues: Chitobiosyldiphosphodolichol beta-mannosyltransferase (464 aa).

At 1-2 the chain is on the lumenal side; that stretch reads MA. A helical transmembrane segment spans residues 3–23; the sequence is ASCLVLLALCLLLPLLLLGGW. Residues 24-99 lie on the Cytoplasmic side of the membrane; that stretch reads KRWRRGRTAR…ELQSLAVGPR (76 aa). Residues 100 to 120 constitute an intramembrane region (helical); it reads VFQYGVKVVFQAMYLLWKLMW. Residues 121 to 464 are Cytoplasmic-facing; it reads REPGAYIFLQ…QTVLPLVMDT (344 aa). Serine 242 is modified (phosphoserine). The segment at 242–261 is disordered; the sequence is SPFRARSEPEDPATERSAFT.

This sequence belongs to the glycosyltransferase group 1 family. Glycosyltransferase 33 subfamily.

Its subcellular location is the endoplasmic reticulum membrane. The catalysed reaction is an N,N'-diacetylchitobiosyl-diphospho-di-trans,poly-cis-dolichol + GDP-alpha-D-mannose = a beta-D-Man-(1-&gt;4)-beta-D-GlcNAc-(1-&gt;4)-alpha-D-GlcNAc-diphospho-di-trans,poly-cis-dolichol + GDP + H(+). The protein operates within protein modification; protein glycosylation. Mannosyltransferase that operates in the biosynthetic pathway of dolichol-linked oligosaccharides, the glycan precursors employed in protein asparagine (N)-glycosylation. The assembly of dolichol-linked oligosaccharides begins on the cytosolic side of the endoplasmic reticulum membrane and finishes in its lumen. The sequential addition of sugars to dolichol pyrophosphate produces dolichol-linked oligosaccharides containing fourteen sugars, including two GlcNAcs, nine mannoses and three glucoses. Once assembled, the oligosaccharide is transferred from the lipid to nascent proteins by oligosaccharyltransferases. Catalyzes, on the cytoplasmic face of the endoplasmic reticulum, the addition of the first mannose residues to the dolichol-linked oligosaccharide chain, to produce Man1GlcNAc(2)-PP-dolichol core oligosaccharide. Man1GlcNAc(2)-PP-dolichol is a substrate for ALG2, the following enzyme in the biosynthetic pathway. The polypeptide is Chitobiosyldiphosphodolichol beta-mannosyltransferase (Pongo abelii (Sumatran orangutan)).